The following is an 876-amino-acid chain: Alanine--tRNA ligase (876 aa).

The segment at 2–461 is catalytic; sequence SKSTAEIRQA…VDSASEFKGY (460 aa). Residue Lys-74 is modified to N6-acetyllysine. The interval 553–705 is editing; that stretch reads DEARRARIRL…EAVTGEGAIA (153 aa). Zn(2+) contacts are provided by His-564, His-568, Cys-666, and His-670. Positions 699 to 808 are important for oligomerization; sequence TGEGAIATVH…STIIVLATVV (110 aa). A C-Ala domain region spans residues 766–875; sequence IDVNGVKLLV…SVKGWVSAKL (110 aa).

Belongs to the class-II aminoacyl-tRNA synthetase family. As to quaternary structure, homotetramer. It depends on Zn(2+) as a cofactor.

Its subcellular location is the cytoplasm. It carries out the reaction tRNA(Ala) + L-alanine + ATP = L-alanyl-tRNA(Ala) + AMP + diphosphate. The catalysed reaction is (S)-lactate + ATP + H(+) = (S)-lactoyl-AMP + diphosphate. It catalyses the reaction (S)-lactoyl-AMP + L-lysyl-[protein] = N(6)-[(S)-lactoyl]-L-lysyl-[protein] + AMP + 2 H(+). Its activity is regulated as follows. Acetylation at Lys-74 decreases the alanylation activity for tRNA(Ala); a protein that is fully acetylated is inactive in vitro. Functionally, catalyzes the attachment of L-alanine to tRNA(Ala) in a two-step reaction: L-alanine is first activated by ATP to form Ala-AMP and then transferred to the acceptor end of tRNA(Ala). AlaRS also incorrectly activates the sterically smaller amino acid glycine as well as the sterically larger amino acid L-serine; generates 2-fold more mischarged Gly than Ser. These mischarged amino acids occur because the of inherent physicochemical limitations on discrimination between closely related amino acids (Ala, Gly and Ser) in the charging step. In presence of high levels of lactate, also acts as a protein lactyltransferase that mediates lactylation of lysine residues in target proteins. In terms of biological role, edits mischarged Ser-tRNA(Ala) and Gly-tRNA(Ala) but not incorrectly charged Ser-tRNA(Thr). Dtd edits Gly-tRNA(Ala) 4-fold better than does AlaRS. Its function is as follows. Attaches Ala to transfer-messenger RNA (tmRNA, also known as 10Sa RNA, the product of the ssrA gene). tmRNA plays a major role in rescue of stalled ribosomes via trans-translation. The polypeptide is Alanine--tRNA ligase (alaS) (Escherichia coli (strain K12)).